The primary structure comprises 874 residues: Alanine--tRNA ligase (874 aa).

Zn(2+) is bound by residues histidine 562, histidine 566, cysteine 663, and histidine 667.

It belongs to the class-II aminoacyl-tRNA synthetase family. Zn(2+) is required as a cofactor.

The protein localises to the cytoplasm. The catalysed reaction is tRNA(Ala) + L-alanine + ATP = L-alanyl-tRNA(Ala) + AMP + diphosphate. Its function is as follows. Catalyzes the attachment of alanine to tRNA(Ala) in a two-step reaction: alanine is first activated by ATP to form Ala-AMP and then transferred to the acceptor end of tRNA(Ala). Also edits incorrectly charged Ser-tRNA(Ala) and Gly-tRNA(Ala) via its editing domain. The chain is Alanine--tRNA ligase from Bordetella bronchiseptica (strain ATCC BAA-588 / NCTC 13252 / RB50) (Alcaligenes bronchisepticus).